A 286-amino-acid polypeptide reads, in one-letter code: Pyridoxal kinase PdxY (286 aa).

Substrate-binding positions include Ser-9 and 44-45 (MQ). ATP contacts are provided by Asp-111, Glu-147, and Lys-180. Asp-221 serves as a coordination point for substrate.

The protein belongs to the pyridoxine kinase family. PdxY subfamily. Homodimer. Requires Mg(2+) as cofactor.

The catalysed reaction is pyridoxal + ATP = pyridoxal 5'-phosphate + ADP + H(+). Its pathway is cofactor metabolism; pyridoxal 5'-phosphate salvage; pyridoxal 5'-phosphate from pyridoxal: step 1/1. Its function is as follows. Pyridoxal kinase involved in the salvage pathway of pyridoxal 5'-phosphate (PLP). Catalyzes the phosphorylation of pyridoxal to PLP. The sequence is that of Pyridoxal kinase PdxY from Burkholderia lata (strain ATCC 17760 / DSM 23089 / LMG 22485 / NCIMB 9086 / R18194 / 383).